Reading from the N-terminus, the 259-residue chain is Acyl-[acyl-carrier-protein]--UDP-N-acetylglucosamine O-acyltransferase (259 aa).

This sequence belongs to the transferase hexapeptide repeat family. LpxA subfamily. As to quaternary structure, homotrimer.

Its subcellular location is the cytoplasm. It catalyses the reaction a (3R)-hydroxyacyl-[ACP] + UDP-N-acetyl-alpha-D-glucosamine = a UDP-3-O-[(3R)-3-hydroxyacyl]-N-acetyl-alpha-D-glucosamine + holo-[ACP]. It participates in glycolipid biosynthesis; lipid IV(A) biosynthesis; lipid IV(A) from (3R)-3-hydroxytetradecanoyl-[acyl-carrier-protein] and UDP-N-acetyl-alpha-D-glucosamine: step 1/6. Its function is as follows. Involved in the biosynthesis of lipid A, a phosphorylated glycolipid that anchors the lipopolysaccharide to the outer membrane of the cell. The protein is Acyl-[acyl-carrier-protein]--UDP-N-acetylglucosamine O-acyltransferase of Nautilia profundicola (strain ATCC BAA-1463 / DSM 18972 / AmH).